The following is a 294-amino-acid chain: MKPFLRWCFVATALTLAGCSNTSWRKSEVLAVPLQPTLQQEVILARMEQILASRALTDDERAQLLYERGVLYDSLGLRALARNDFSQALAIRPDMPEVFNYLGIYLTQAGNFDAAYEAFDSVLELDPTYNYAHLNRGIALYYGGRDKLAQDDLLAFYQDDPNDPFRSLWLYLAEQKLDEKQAKEVLKQHFEKSDKEQWGWNIVEFYLGNISEQTLMERLKADATDNTSLAEHLSETNFYLGKYYLSLGDSDSATALFKLAVANNVHNFVEHRYALLELSLLGQDQDDLAESDQQ.

A signal peptide spans 1 to 18 (MKPFLRWCFVATALTLAG). Cys19 carries N-palmitoyl cysteine lipidation. Cys19 carries S-diacylglycerol cysteine lipidation. TPR repeat units lie at residues 62 to 95 (AQLLYERGVLYDSLGLRALARNDFSQALAIRPDM), 96 to 129 (PEVFNYLGIYLTQAGNFDAAYEAFDSVLELDPTY), and 234 to 267 (SETNFYLGKYYLSLGDSDSATALFKLAVANNVHN).

Homodimer.

It is found in the cell membrane. Its function is as follows. May be involved in cell division. May play a role in bacterial septation or regulation of cell wall degradation during cell division. The sequence is that of Lipoprotein NlpI (nlpI) from Shigella boydii serotype 4 (strain Sb227).